The sequence spans 2320 residues: Bromodomain and WD repeat-containing protein 1 (2320 aa).

8 WD repeats span residues 184–223 (GHLS…LLST), 226–265 (GHSA…PVAV), 268–311 (GHTG…LKFS), 322–365 (RPGV…AELE), 366–405 (SHTD…WRSI), 424–463 (FMKP…LLHN), 466–506 (GHAD…KMKH), and 514–553 (QGHG…PYEK). Positions 668–691 (QRMGADQDTIPRGLSNGEETPRRG) are disordered. Thr687 is subject to Phosphothreonine. 3 positions are modified to phosphoserine: Ser696, Ser701, and Ser710. Disordered regions lie at residues 809 to 867 (NRSW…RYSD) and 895 to 925 (SEDE…ENLR). Composition is skewed to low complexity over residues 814 to 824 (ELSSGNESSSS) and 854 to 867 (YSES…RYSD). The segment covering 907-918 (PKRRRKRKKENK) has biased composition (basic residues). The Bromo 1 domain maps to 1157–1264 (WGQKSRDEEC…DQLLKFIKNQ (108 aa)). The disordered stretch occupies residues 1271-1304 (ELSNTSENDEQNAEDLDDSDLPKTSSGRRRVHDG). Positions 1277–1289 (ENDEQNAEDLDDS) are enriched in acidic residues. A Phosphoserine modification is found at Ser1289. One can recognise a Bromo 2 domain in the interval 1313 to 1418 (YVESNWKKQC…ALFEEKMKKI (106 aa)). Residues 1434–1593 (RSQRFKQRQN…TGPVSLANGC (160 aa)) form a disordered region. Residues 1443-1454 (NCKGDSQPNKSI) show a composition bias toward polar residues. A compositionally biased stretch (basic residues) spans 1455-1464 (RNLKPKRLKS). Phosphoserine is present on Ser1475. Residues 1475 to 1496 (SPTQSTSSRTAYLGTHKTSAGI) are compositionally biased toward polar residues. Residue Thr1477 is modified to Phosphothreonine. Ser1479 is modified (phosphoserine). Positions 1497 to 1509 (SSGVTSGDSSDSA) are enriched in low complexity. The span at 1520–1529 (PITNGSTLSE) shows a compositional bias: polar residues. Residues 1535–1548 (SLATSLSSSASSSS) are compositionally biased toward low complexity. Residues 1549-1561 (EESKESSRARESS) show a composition bias toward basic and acidic residues. 5 positions are modified to phosphoserine: Ser1605, Ser1607, Ser1678, Ser1683, and Ser1686. Disordered regions lie at residues 1670–1805 (ARKK…KYNT), 1817–1839 (KILS…KCHK), and 1862–1899 (DHGC…KISR). The span at 1676–1687 (HNSEDEQSLKSE) shows a compositional bias: basic and acidic residues. Residues 1701 to 1712 (PVSSSHTAQSNV) are compositionally biased toward polar residues. 2 stretches are compositionally biased toward basic and acidic residues: residues 1715 to 1728 (SENR…DLRV) and 1751 to 1769 (LKIE…DHAC). Phosphoserine is present on residues Ser1755, Ser1756, Ser1786, Ser1788, Ser1793, and Ser1820. Residues 1821–1832 (DSEDSESEEQDR) show a composition bias toward acidic residues. A Phosphothreonine modification is found at Thr1867. Residues Ser1871, Ser1904, Ser1905, Ser1907, Ser1910, and Ser1943 each carry the phosphoserine modification. Phosphothreonine is present on Thr1955. Disordered regions lie at residues 2014 to 2077 (LNGD…TLAQ) and 2112 to 2184 (TKVI…TKGK). Phosphoserine occurs at positions 2018, 2020, and 2052. Composition is skewed to basic and acidic residues over residues 2054-2069 (EDSK…DRTF) and 2114-2139 (VIHD…ENVK). Residues 2140 to 2165 (ISETTGNSKFRPDTSSKSSDLGSVTE) show a composition bias toward polar residues. Position 2164 is a phosphothreonine (Thr2164). Phosphoserine occurs at positions 2166 and 2214.

In terms of assembly, interacts with SMARCA4. Ubiquitously expressed. Expressed in respiratory epithelial cells and testis spermatozoa.

The protein resides in the cytoplasm. It is found in the nucleus. The protein localises to the cell projection. It localises to the cilium membrane. Its subcellular location is the cytoskeleton. The protein resides in the flagellum axoneme. Functionally, may be a transcriptional activator. May be involved in chromatin remodeling. Plays a role in the regulation of cell morphology and cytoskeletal organization. Required in the control of cell shape. This is Bromodomain and WD repeat-containing protein 1 (BRWD1) from Homo sapiens (Human).